Consider the following 166-residue polypeptide: Putative transmembrane protein encoded by LINC00477 (166 aa).

Asn7 carries N-linked (GlcNAc...) asparagine glycosylation. 3 helical membrane-spanning segments follow: residues 15 to 35 (VSSF…FFLC), 41 to 61 (MTGC…VLGP), and 63 to 83 (PMGM…RFLG). A disordered region spans residues 127 to 166 (LPVPHPPSPLSKCPQHPRPRRTKGPGLRKLWGPGPPFFPS).

It localises to the membrane. This is Putative transmembrane protein encoded by LINC00477 (LINC00477) from Homo sapiens (Human).